A 274-amino-acid polypeptide reads, in one-letter code: Dermonecrotic toxin SaSicTox-betaIIB1 (274 aa).

Histidine 5 is an active-site residue. 2 residues coordinate Mg(2+): glutamate 25 and aspartate 27. Histidine 41 (nucleophile) is an active-site residue. 2 disulfide bridges follow: cysteine 45-cysteine 51 and cysteine 47-cysteine 190. Mg(2+) is bound at residue aspartate 85.

It belongs to the arthropod phospholipase D family. Class II subfamily. Mg(2+) serves as cofactor. As to expression, expressed by the venom gland.

It localises to the secreted. It catalyses the reaction an N-(acyl)-sphingosylphosphocholine = an N-(acyl)-sphingosyl-1,3-cyclic phosphate + choline. The enzyme catalyses an N-(acyl)-sphingosylphosphoethanolamine = an N-(acyl)-sphingosyl-1,3-cyclic phosphate + ethanolamine. The catalysed reaction is a 1-acyl-sn-glycero-3-phosphocholine = a 1-acyl-sn-glycero-2,3-cyclic phosphate + choline. It carries out the reaction a 1-acyl-sn-glycero-3-phosphoethanolamine = a 1-acyl-sn-glycero-2,3-cyclic phosphate + ethanolamine. Functionally, dermonecrotic toxins cleave the phosphodiester linkage between the phosphate and headgroup of certain phospholipids (sphingolipid and lysolipid substrates), forming an alcohol (often choline) and a cyclic phosphate. This toxin acts on sphingomyelin (SM). It may also act on ceramide phosphoethanolamine (CPE), lysophosphatidylcholine (LPC) and lysophosphatidylethanolamine (LPE), but not on lysophosphatidylserine (LPS), and lysophosphatidylglycerol (LPG). It acts by transphosphatidylation, releasing exclusively cyclic phosphate products as second products. Induces dermonecrosis, hemolysis, increased vascular permeability, edema, inflammatory response, and platelet aggregation. This is Dermonecrotic toxin SaSicTox-betaIIB1 from Sicarius albospinosus (Six-eyed crab spider).